The primary structure comprises 398 residues: 1-deoxy-D-xylulose 5-phosphate reductoisomerase (398 aa).

Positions 10, 11, 12, 13, 36, 37, 38, and 124 each coordinate NADPH. Lys125 provides a ligand contact to 1-deoxy-D-xylulose 5-phosphate. An NADPH-binding site is contributed by Glu126. Residue Asp150 coordinates Mn(2+). Residues Ser151, Glu152, Ser186, and His209 each contribute to the 1-deoxy-D-xylulose 5-phosphate site. Glu152 contacts Mn(2+). Position 215 (Gly215) interacts with NADPH. Positions 222, 227, 228, and 231 each coordinate 1-deoxy-D-xylulose 5-phosphate. Glu231 provides a ligand contact to Mn(2+).

The protein belongs to the DXR family. Homodimer. Mg(2+) is required as a cofactor. It depends on Mn(2+) as a cofactor.

The catalysed reaction is 2-C-methyl-D-erythritol 4-phosphate + NADP(+) = 1-deoxy-D-xylulose 5-phosphate + NADPH + H(+). It participates in isoprenoid biosynthesis; isopentenyl diphosphate biosynthesis via DXP pathway; isopentenyl diphosphate from 1-deoxy-D-xylulose 5-phosphate: step 1/6. Its function is as follows. Catalyzes the NADPH-dependent rearrangement and reduction of 1-deoxy-D-xylulose-5-phosphate (DXP) to 2-C-methyl-D-erythritol 4-phosphate (MEP). In Yersinia pseudotuberculosis serotype O:1b (strain IP 31758), this protein is 1-deoxy-D-xylulose 5-phosphate reductoisomerase.